The chain runs to 441 residues: Probable pyridine nucleotide-disulfide oxidoreductase RclA (441 aa).

33–43 (EQSNAMYGGTC) is an FAD binding site. Cys-43 and Cys-48 form a disulfide bridge. Catalysis depends on His-426, which acts as the Proton acceptor.

Belongs to the class-I pyridine nucleotide-disulfide oxidoreductase family. FAD is required as a cofactor.

In terms of biological role, probably involved in reactive chlorine species (RCS) stress resistance. The protein is Probable pyridine nucleotide-disulfide oxidoreductase RclA (rclA) of Escherichia coli (strain K12).